A 106-amino-acid chain; its full sequence is Large ribosomal subunit protein uL24 (106 aa).

Belongs to the universal ribosomal protein uL24 family. In terms of assembly, part of the 50S ribosomal subunit.

Its function is as follows. One of two assembly initiator proteins, it binds directly to the 5'-end of the 23S rRNA, where it nucleates assembly of the 50S subunit. One of the proteins that surrounds the polypeptide exit tunnel on the outside of the subunit. The polypeptide is Large ribosomal subunit protein uL24 (Thermosipho africanus (strain TCF52B)).